The sequence spans 509 residues: Ribonuclease Y (509 aa).

The chain crosses the membrane as a helical span at residues 3 to 23; sequence WILYVILPAVCIILGWTIRWL. A KH domain is found at 199–284; the sequence is TVSTVSLPSD…EIVQKVTREI (86 aa). In terms of domain architecture, HD spans 325–418; it reads VLQHSKEVAI…VQIADAISAA (94 aa).

The protein belongs to the RNase Y family.

Its subcellular location is the cell membrane. Endoribonuclease that initiates mRNA decay. The sequence is that of Ribonuclease Y from Treponema denticola (strain ATCC 35405 / DSM 14222 / CIP 103919 / JCM 8153 / KCTC 15104).